Reading from the N-terminus, the 325-residue chain is Apoptosis-enhancing nuclease (325 aa).

Residues 27-35 carry the Nucleolar localization signal motif; it reads RKRHKRRSR. The disordered stretch occupies residues 85 to 105; the sequence is RAGSGSAPCSRRPAPGKASGP. The Exonuclease domain maps to 110 to 266; the sequence is CVAIDCEMVG…EDATTAMELY (157 aa). Positions 165-188 match the Nuclear localization signal motif; sequence RQHMRKAVPFQVAQKEILKLLKGK. Positions 281–325 are disordered; the sequence is LWTCPEDREPDSSTDMEQYMEDQYWPDDLAHGSRGGAREAQDRRN. The segment covering 308-325 has biased composition (basic and acidic residues); that stretch reads DLAHGSRGGAREAQDRRN.

It is found in the nucleus. Its subcellular location is the nucleolus. Functionally, exonuclease with activity against single- and double-stranded DNA and RNA. Mediates p53-induced apoptosis. When induced by p53 following DNA damage, digests double-stranded DNA to form single-stranded DNA and amplifies DNA damage signals, leading to enhancement of apoptosis. The sequence is that of Apoptosis-enhancing nuclease (AEN) from Homo sapiens (Human).